A 380-amino-acid chain; its full sequence is Tubulin-like protein CetZ (380 aa).

Residues 10-14 (QCGTK), 103-105 (GTG), glutamate 136, asparagine 163, and asparagine 181 contribute to the GTP site. Residues 359–380 (PSLEATGSDDPEGFAEYREVSR) are disordered.

Belongs to the CetZ family.

The protein resides in the cytoplasm. Its function is as follows. Involved in cell shape control. The chain is Tubulin-like protein CetZ from Thermococcus kodakarensis (strain ATCC BAA-918 / JCM 12380 / KOD1) (Pyrococcus kodakaraensis (strain KOD1)).